Reading from the N-terminus, the 438-residue chain is Na(+)/H(+) antiporter NhaA 2 (438 aa).

A run of 11 helical transmembrane segments spans residues 21–41 (SGGI…NSPW), 66–86 (LHHW…GLEL), 102–122 (MLPI…FHFI), 130–150 (KGWG…LALL), 160–180 (IFLT…IALF), 183–203 (GELA…LIAG), 206–226 (LGVQ…VVLL), 308–328 (WVIF…VLQL), 341–361 (LGVA…FSWI), 376–396 (WMDV…SLFI), and 410–430 (AKLG…TVLS).

It belongs to the NhaA Na(+)/H(+) (TC 2.A.33) antiporter family.

The protein resides in the cell inner membrane. The catalysed reaction is Na(+)(in) + 2 H(+)(out) = Na(+)(out) + 2 H(+)(in). In terms of biological role, na(+)/H(+) antiporter that extrudes sodium in exchange for external protons. The sequence is that of Na(+)/H(+) antiporter NhaA 2 from Syntrophotalea carbinolica (strain DSM 2380 / NBRC 103641 / GraBd1) (Pelobacter carbinolicus).